The following is a 428-amino-acid chain: Phosphomethylpyrimidine synthase 1 (428 aa).

Residues N65, M94, Y123, H158, 180–182, 221–224, and E260 each bind substrate; these read SRG and DGMR. H264 is a binding site for Zn(2+). A substrate-binding site is contributed by Y287. H328 lines the Zn(2+) pocket. The [4Fe-4S] cluster site is built by C405, C408, and C412.

Belongs to the ThiC family. The cofactor is [4Fe-4S] cluster.

It catalyses the reaction 5-amino-1-(5-phospho-beta-D-ribosyl)imidazole + S-adenosyl-L-methionine = 4-amino-2-methyl-5-(phosphooxymethyl)pyrimidine + CO + 5'-deoxyadenosine + formate + L-methionine + 3 H(+). It participates in cofactor biosynthesis; thiamine diphosphate biosynthesis. Functionally, catalyzes the synthesis of the hydroxymethylpyrimidine phosphate (HMP-P) moiety of thiamine from aminoimidazole ribotide (AIR) in a radical S-adenosyl-L-methionine (SAM)-dependent reaction. This Methanosarcina mazei (strain ATCC BAA-159 / DSM 3647 / Goe1 / Go1 / JCM 11833 / OCM 88) (Methanosarcina frisia) protein is Phosphomethylpyrimidine synthase 1.